The sequence spans 109 residues: Putative membrane protein insertion efficiency factor (109 aa).

The protein belongs to the UPF0161 family.

Its subcellular location is the cell inner membrane. In terms of biological role, could be involved in insertion of integral membrane proteins into the membrane. This Rhodopseudomonas palustris (strain BisA53) protein is Putative membrane protein insertion efficiency factor.